A 333-amino-acid chain; its full sequence is Trans-enoyl reductase apdC (333 aa).

Residue 45–48 coordinates NADP(+); sequence FDAK. Substrate is bound at residue 131–138; it reads VGLATVGM. Residues 167 to 170, tyrosine 185, and 232 to 233 contribute to the NADP(+) site; these read SPHN and LD. 252-256 contributes to the substrate binding site; it reads SVTMY. An NADP(+)-binding site is contributed by 321-322; the sequence is VS.

It belongs to the zinc-containing alcohol dehydrogenase family. In terms of assembly, monomer.

It participates in secondary metabolite biosynthesis. In terms of biological role, trans-enoyl reductase; part of the gene cluster that mediates the biosynthesis of aspyridones. The polyketide-amino acid backbone preaspyridone A is first assembled by the PKS-NRPS hybrid apdA. The assembly of preaspyridone A is initiated by loading of malonyl-CoA onto apdA, followed by decarboxylation to yield the acetyl starter unit. The growing polyketide chain then elongates into a tetraketide. The adpA PKS module catalyzes three Claisen condensations, as well as beta-keto processing and methylation. Alpha-methylation step during polyketide synthesis is a prerequisite and a key checkpoint for chain transfer between PKS and NRPS modules. The downstream NRPS module contains the condensation (C), adenylation (A), and thiolation (T) domains and catalyzes the incorporation of tyrosine via the formation of the L-tyrosinyl-thioester and the amide linkage between L-tyrosinyl-thioester and the tetraketide. The bimodular assembly line is terminated with a reductase (R) domain that facilitates formation and release of the tetramic acid product. Because apdA lacks a designated enoylreductase (ER) domain, the required activity is provided the enoyl reductase apdC. ApdC appears to operate with different stereoselectivity in different PKS cycle. Combined with apdC, apdA is proposed to synthesize preaspyridone A via about 20 enzymatic steps. A number of oxidative steps performed successively by the cytochrome P450 monooxygenases apdE and apdB are required for the conversion of preaspyridone A to aspyridone A. The cytochrome P450 monooxygenase apdE is responsible for the oxidative dephenylation of preaspyridone A. Finally, the predicted FAD-dependent monooxygenase apdD and the acyl-CoA dehydrogenase apdG may be involved in the transformation of aspyridone A into aspyridone B. The chain is Trans-enoyl reductase apdC from Emericella nidulans (strain FGSC A4 / ATCC 38163 / CBS 112.46 / NRRL 194 / M139) (Aspergillus nidulans).